We begin with the raw amino-acid sequence, 537 residues long: MESSSSLKGSALGKLVVTSGLLHSSWSKILEIHNPPYSNHDPGLQVSKKKKDSGLEFQIHREEKFTLVVFSAPPICRSSSSDSTLLHVKDKENPFPFLCSENNPSFSLHTPAFNLFTSASTSLTYLKSELLQTLKSEKPVIITGAALGGSVASLYTLWLLETIEPTLKRPLCITFGSPLIGDASLQQILENSVRNSCFLHVVSAQTRIKMDFFKPFGTFLICFDSGCVCIEDHVAVTELLNGVHDSGLVDYSQVLNRLDQSMLSLADSRLIPEDVIKGIEKRAEMKNLRFDMMFKKLNDMKISMAYIEWYKKKCKEVKIGYYDRFKTQLAFPSKEFDINIKNHHKSELNRFWKSVVEEVERRPQSDASILKRRFLFSGNNYRRMIEPLDIAEYYLEGRKEYRTTGRSHHYVMLEKWFGMESILIEKERCKKRDLSDLLTFDSCFWAEVEDSLIVINQLNTTVGMRDDVREVLTRKLVEFEGYVWEIITKREVSPEIFLEESSFMKWWKEYKKIKGFNSSYLTEFMNTRKYESYGKSQ.

The signal sequence occupies residues 1 to 27 (MESSSSLKGSALGKLVVTSGLLHSSWS). A helical transmembrane segment spans residues 140–160 (VIITGAALGGSVASLYTLWLL).

Part of a nuclear complex made of EDS1, PAD4 and SAG101, that can be redirected to the cytoplasm in the presence of an extranuclear form of EDS1. Interacts directly with EDS1. Expressed in senescing leaves.

Its subcellular location is the membrane. The protein localises to the nucleus. It is found in the cytoplasm. The enzyme catalyses a carboxylic ester + H2O = an alcohol + a carboxylate + H(+). Functionally, acyl hydrolase that triggers the leaf senescence onset. Can use triolein as substrate to produce oleic acids. In terms of biological role, involved in the EDS1-dependent intrinsic and indispensable resistance signaling pathway; together with PAD4, required for programmed cell death triggered by RPS4 in response to avirulent pathogens (e.g. P.syringae pv. tomato strain DC3000 and H.parasitica isolates CALA2 and EMWA1) and in restricting the growth of virulent pathogens (e.g. H.parasitica isolates NOCO2 and P.syringae pv. tomato strain DC3000 avrRps4). Contributes in reinforcing the immune response around hypersensitive response foci. Regulates the nuclear localization of EDS1. Essential for the RPP8/HRT-mediated resistance to the turnip crinkle virus (TCV). Involved in the post-invasion resistance to P.pachyrhizi in the mesophyll. The sequence is that of Senescence-associated carboxylesterase 101 (SAG101) from Arabidopsis thaliana (Mouse-ear cress).